The sequence spans 562 residues: Putative transport protein PC1_1686 (562 aa).

Helical transmembrane passes span 8-28 (LLNG…LCLG), 32-52 (LGPV…LLGQ), 66-86 (FMLF…SIFF), 93-113 (FMLA…LGKF), 116-136 (WGIG…PVLV), and 158-178 (HLSL…IFGA). RCK C-terminal domains follow at residues 202–288 (LDAD…NFRD) and 292–373 (VFDR…RIGF). The next 5 helical transmembrane spans lie at 383–403 (LLAF…TIQF), 406–426 (FTFG…LGFL), 447–467 (FGLM…INSS), 478–498 (SGLI…AYVL), and 537–557 (GTYA…VIIW).

This sequence belongs to the AAE transporter (TC 2.A.81) family. YbjL subfamily.

The protein localises to the cell membrane. This is Putative transport protein PC1_1686 from Pectobacterium carotovorum subsp. carotovorum (strain PC1).